The chain runs to 145 residues: Acidic phospholipase A2 homolog textilotoxin C chain (145 aa).

The signal sequence occupies residues 1-19 (MHPAHLLVLLGVYVSLLGA). A propeptide spanning residues 20 to 27 (ARIPPLPL) is cleaved from the precursor. Disulfide bonds link cysteine 38/cysteine 98, cysteine 54/cysteine 144, cysteine 56/cysteine 72, cysteine 71/cysteine 125, cysteine 78/cysteine 118, cysteine 87/cysteine 111, and cysteine 105/cysteine 116.

This sequence belongs to the phospholipase A2 family. Group I subfamily. D49 sub-subfamily. In terms of assembly, heterohexamer. 2 forms exist: 2 A or 2 B chains, 2 C chains and 2 covalently-linked D chains, and 1 A or 1 B, 1 C, 2 covalently-linked D chains and 2 differentially glycosylated covalently-linked D chains. Textilotoxin was originally described as pentameric. As to expression, expressed by the venom gland.

The protein resides in the secreted. Snake venom oligomeric phospholipase A2 that has potent presynaptic neurotoxicity. Chain C is not itself neurotoxic, but it is essential for the neurotoxicity of textilotoxin. Chain C possesses a very low phospholipase activity. The sequence is that of Acidic phospholipase A2 homolog textilotoxin C chain from Pseudonaja textilis (Eastern brown snake).